Reading from the N-terminus, the 121-residue chain is Ribosome-binding factor A (121 aa).

Belongs to the RbfA family. Monomer. Binds 30S ribosomal subunits, but not 50S ribosomal subunits or 70S ribosomes.

Its subcellular location is the cytoplasm. In terms of biological role, one of several proteins that assist in the late maturation steps of the functional core of the 30S ribosomal subunit. Associates with free 30S ribosomal subunits (but not with 30S subunits that are part of 70S ribosomes or polysomes). Required for efficient processing of 16S rRNA. May interact with the 5'-terminal helix region of 16S rRNA. The sequence is that of Ribosome-binding factor A from Hydrogenovibrio crunogenus (strain DSM 25203 / XCL-2) (Thiomicrospira crunogena).